Here is a 144-residue protein sequence, read N- to C-terminus: Transcriptional regulator SlyA (144 aa).

Positions 2 to 135 (ESPLGSDLAR…LIKLIAKLEH (134 aa)) constitute an HTH marR-type domain. The H-T-H motif DNA-binding region spans 49–72 (QIQLAKAIGIEQPSLVRTLDQLEE).

It belongs to the SlyA family. Homodimer.

Functionally, transcription regulator that can specifically activate or repress expression of target genes. The chain is Transcriptional regulator SlyA from Escherichia coli O127:H6 (strain E2348/69 / EPEC).